A 551-amino-acid polypeptide reads, in one-letter code: L-lactate permease (551 aa).

12 helical membrane passes run 13 to 33 (NIWLSSLIASLPILFFFFALI), 37 to 57 (LKGYVAASWTVVIALAVALLF), 69 to 89 (VVYGFFYGLWPIAWIIIAAVF), 131 to 151 (GAAGFGAPVAITAALLVGLGF), 159 to 179 (LCLIVNTAPVAFGAMGIPILV), 194 to 214 (MVGRQLPFLTIIVLFWIMAIM), 245 to 265 (IGPELPDIISSLVSLVCLTLF), 306 to 326 (FLFLTATVTLWSIPPFKALFA), 366 to 386 (FDWFSATGTAILFAALLSIVW), 405 to 425 (LALPIYSIGMVLAFAFISNYS), 438 to 458 (TGSAFTFFSPFLGWLGVFLTG), and 530 to 550 (IFTCMVGVITTLQAYVLTWMI).

This sequence belongs to the lactate permease family.

Its subcellular location is the cell inner membrane. It catalyses the reaction (S)-lactate(in) + H(+)(in) = (S)-lactate(out) + H(+)(out). The enzyme catalyses (R)-lactate(in) + H(+)(in) = (R)-lactate(out) + H(+)(out). The catalysed reaction is glycolate(in) + H(+)(in) = glycolate(out) + H(+)(out). Its function is as follows. Uptake of L-lactate across the membrane. Can also transport D-lactate and glycolate. Seems to be driven by a proton motive force. In Salmonella typhi, this protein is L-lactate permease (lldP).